We begin with the raw amino-acid sequence, 261 residues long: Cytochrome c oxidase subunit 3 (261 aa).

Residues M1 to P15 lie on the Mitochondrial matrix side of the membrane. A helical transmembrane segment spans residues W16 to W34. Residues F35–T40 are Mitochondrial intermembrane-facing. Residues I41–T66 form a helical membrane-spanning segment. The Mitochondrial matrix portion of the chain corresponds to F67–T72. A helical membrane pass occupies residues P73–S105. The Mitochondrial intermembrane segment spans residues L106–E128. The chain crosses the membrane as a helical span at residues V129–M152. Residues E153–D155 are Mitochondrial matrix-facing. A helical membrane pass occupies residues R156–E183. Residues A184–D190 lie on the Mitochondrial intermembrane side of the membrane. A helical membrane pass occupies residues G191–L223. The Mitochondrial matrix segment spans residues K224–H232. A helical membrane pass occupies residues F233–I256. Over Y257 to S261 the chain is Mitochondrial intermembrane.

Belongs to the cytochrome c oxidase subunit 3 family. As to quaternary structure, component of the cytochrome c oxidase (complex IV, CIV), a multisubunit enzyme composed of 14 subunits. The complex is composed of a catalytic core of 3 subunits MT-CO1, MT-CO2 and MT-CO3, encoded in the mitochondrial DNA, and 11 supernumerary subunits COX4I, COX5A, COX5B, COX6A, COX6B, COX6C, COX7A, COX7B, COX7C, COX8 and NDUFA4, which are encoded in the nuclear genome. The complex exists as a monomer or a dimer and forms supercomplexes (SCs) in the inner mitochondrial membrane with NADH-ubiquinone oxidoreductase (complex I, CI) and ubiquinol-cytochrome c oxidoreductase (cytochrome b-c1 complex, complex III, CIII), resulting in different assemblies (supercomplex SCI(1)III(2)IV(1) and megacomplex MCI(2)III(2)IV(2)).

The protein resides in the mitochondrion inner membrane. It carries out the reaction 4 Fe(II)-[cytochrome c] + O2 + 8 H(+)(in) = 4 Fe(III)-[cytochrome c] + 2 H2O + 4 H(+)(out). Functionally, component of the cytochrome c oxidase, the last enzyme in the mitochondrial electron transport chain which drives oxidative phosphorylation. The respiratory chain contains 3 multisubunit complexes succinate dehydrogenase (complex II, CII), ubiquinol-cytochrome c oxidoreductase (cytochrome b-c1 complex, complex III, CIII) and cytochrome c oxidase (complex IV, CIV), that cooperate to transfer electrons derived from NADH and succinate to molecular oxygen, creating an electrochemical gradient over the inner membrane that drives transmembrane transport and the ATP synthase. Cytochrome c oxidase is the component of the respiratory chain that catalyzes the reduction of oxygen to water. Electrons originating from reduced cytochrome c in the intermembrane space (IMS) are transferred via the dinuclear copper A center (CU(A)) of subunit 2 and heme A of subunit 1 to the active site in subunit 1, a binuclear center (BNC) formed by heme A3 and copper B (CU(B)). The BNC reduces molecular oxygen to 2 water molecules using 4 electrons from cytochrome c in the IMS and 4 protons from the mitochondrial matrix. In Tragelaphus imberbis (Lesser kudu), this protein is Cytochrome c oxidase subunit 3 (MT-CO3).